We begin with the raw amino-acid sequence, 289 residues long: CBY1-interacting BAR domain-containing protein 1 (289 aa).

Residues 1-47 constitute a mitochondrion transit peptide; the sequence is MMRRTLENRNAQTKQLQTAVSNVEKHFGELCQIFAAYVRKTARLRDK. The interval 10-220 is BAR-like; the sequence is NAQTKQLQTA…NIDEDEDLEV (211 aa). Residues 107 to 178 are a coiled coil; sequence KMKRDDLKAT…INNFERQKMK (72 aa). Residues 265–289 form a disordered region; it reads LRKDQQAEDDEDDELDVTEEENFLK. Acidic residues predominate over residues 271 to 289; it reads AEDDEDDELDVTEEENFLK.

Belongs to the CIBAR family. In terms of assembly, homodimer (via BAR-like domain). Heterodimer with FAM92B (via BAR-like domains). Interacts (via BAR-like domain) with CBY1; this interaction is required for targeting FAM92A to centriole and cilium basal body. Interacts (via BAR-like domain) with CBY3; both proteins form a ninefold symmetric structure at the flagellar base; are recruited to the annulus in a mutually dependent manner and regulate annulus positionning.

It is found in the cytoplasm. Its subcellular location is the cytoskeleton. It localises to the microtubule organizing center. The protein resides in the centrosome. The protein localises to the centriole. It is found in the cilium basal body. Its subcellular location is the cell projection. It localises to the cilium. The protein resides in the nucleus. The protein localises to the mitochondrion inner membrane. It is found in the flagellum. In terms of biological role, plays a critical role in regulating mitochondrial ultrastructure and function by maintaining the integrity of mitochondrial morphology, particularly the organization of cristae. Preferentially binds to negatively charged phospholipids like cardiolipin and phosphatidylinositol 4,5-bisphosphate enhancing its interaction with mitochondrial membranes. Induces membrane curvature and tubulation, which are critical for maintaining mitochondrial ultrastructure and the organization of cristae. Plays a crucial role in ciliogenesis. May play a role in limb development through its role in ciliogenesis. Plays a key role in the correct positioning of the annulus, a septin-based ring structure in the sperm flagellum, serving both as a physical barrier and a membrane diffusion barrier that separates the midpiece (MP) from the principal piece (PP). This positioning is essential for proper sperm motility and function. Interacts with CBY3 to form a complex which localizes to the curved membrane region of the flagellar pocket. By doing so, may provide stability and rigidity to the periannular membrane to prevent membrane deformation. This function is crucial for halting annulus migration at the proximal end of the fibrous sheath-containing PP. The protein is CBY1-interacting BAR domain-containing protein 1 of Homo sapiens (Human).